We begin with the raw amino-acid sequence, 429 residues long: UDP-N-acetylglucosamine 1-carboxyvinyltransferase (429 aa).

22–23 (KN) contributes to the phosphoenolpyruvate binding site. Arg102 is a binding site for UDP-N-acetyl-alpha-D-glucosamine. Cys126 serves as the catalytic Proton donor. Cys126 bears the 2-(S-cysteinyl)pyruvic acid O-phosphothioketal mark. Residues 131–135 (RPVDL), Asp316, and Ile338 contribute to the UDP-N-acetyl-alpha-D-glucosamine site.

It belongs to the EPSP synthase family. MurA subfamily.

It is found in the cytoplasm. The catalysed reaction is phosphoenolpyruvate + UDP-N-acetyl-alpha-D-glucosamine = UDP-N-acetyl-3-O-(1-carboxyvinyl)-alpha-D-glucosamine + phosphate. The protein operates within cell wall biogenesis; peptidoglycan biosynthesis. Cell wall formation. Adds enolpyruvyl to UDP-N-acetylglucosamine. In Methylobacterium nodulans (strain LMG 21967 / CNCM I-2342 / ORS 2060), this protein is UDP-N-acetylglucosamine 1-carboxyvinyltransferase.